The chain runs to 229 residues: Peptidase E (229 aa).

Residues serine 120, aspartate 135, and histidine 157 each act as charge relay system in the active site.

This sequence belongs to the peptidase S51 family.

Its subcellular location is the cytoplasm. The enzyme catalyses Dipeptidase E catalyzes the hydrolysis of dipeptides Asp-|-Xaa. It does not act on peptides with N-terminal Glu, Asn or Gln, nor does it cleave isoaspartyl peptides.. Functionally, hydrolyzes dipeptides containing N-terminal aspartate residues. May play a role in allowing the cell to use peptide aspartate to spare carbon otherwise required for the synthesis of the aspartate family of amino acids. This Salmonella paratyphi C (strain RKS4594) protein is Peptidase E.